The chain runs to 523 residues: uncharacterized protein (523 aa).

Residues 193–447 form the Radical SAM core domain; the sequence is RKCSGCGNCR…ALKRRMIGKR (255 aa). Residues cysteine 212, cysteine 220, and cysteine 223 each coordinate [4Fe-4S] cluster.

It depends on [4Fe-4S] cluster as a cofactor.

This is an uncharacterized protein from Methanopyrus kandleri (strain AV19 / DSM 6324 / JCM 9639 / NBRC 100938).